The primary structure comprises 464 residues: Argininosuccinate lyase (464 aa).

The protein belongs to the lyase 1 family. Argininosuccinate lyase subfamily.

The protein localises to the cytoplasm. The catalysed reaction is 2-(N(omega)-L-arginino)succinate = fumarate + L-arginine. The protein operates within amino-acid biosynthesis; L-arginine biosynthesis; L-arginine from L-ornithine and carbamoyl phosphate: step 3/3. This Pseudomonas syringae pv. tomato (strain ATCC BAA-871 / DC3000) protein is Argininosuccinate lyase.